We begin with the raw amino-acid sequence, 146 residues long: Globin (146 aa).

Ser-1 is modified (N-acetylserine). Positions 1 to 146 constitute a Globin domain; it reads SLSGAEADLL…IIDALKKAGK (146 aa). A heme b-binding site is contributed by His-95.

Belongs to the globin family. As to quaternary structure, monomer.

This Bursatella leachii (Ragged sea hare) protein is Globin.